Reading from the N-terminus, the 1148-residue chain is Alpha-mannosidase 2 (1148 aa).

Over 1–5 the chain is Cytoplasmic; it reads MKLSR. A helical; Signal-anchor for type II membrane protein transmembrane segment spans residues 6 to 26; that stretch reads QFTVFGSAIFCVVIFSLYLML. The Lumenal segment spans residues 27-1148; it reads DRGHLDYPRG…EISTSRIRLR (1122 aa). Serine 80 and serine 82 each carry phosphoserine. Asparagine 93 carries an N-linked (GlcNAc...) asparagine glycan. The Zn(2+) site is built by histidine 174, aspartate 176, aspartate 288, and histidine 568. Aspartate 288 acts as the Nucleophile in catalysis. Positions 1121-1148 are disordered; the sequence is MHSPPDAQNTSEVSLSPMEISTSRIRLR.

Belongs to the glycosyl hydrolase 38 family. Homodimer; disulfide-linked. Zn(2+) serves as cofactor. Post-translationally, glycosylated. As to expression, liver.

It is found in the golgi apparatus membrane. It carries out the reaction N(4)-{beta-D-GlcNAc-(1-&gt;2)-alpha-D-Man-(1-&gt;3)-[alpha-D-Man-(1-&gt;3)-[alpha-D-Man-(1-&gt;6)]-alpha-D-Man-(1-&gt;6)]-beta-D-Man-(1-&gt;4)-beta-D-GlcNAc-(1-&gt;4)-beta-D-GlcNAc}-L-asparaginyl-[protein] + 2 H2O = 2 alpha-D-mannopyranose + an N(4)-{beta-D-GlcNAc-(1-&gt;2)-alpha-D-Man-(1-&gt;3)-[alpha-D-Man-(1-&gt;6)]-beta-D-Man-(1-&gt;4)-beta-D-GlcNAc-(1-&gt;4)-beta-D-GlcNAc}-L-asparaginyl-[protein]. It functions in the pathway protein modification; protein glycosylation. Inhibited by swainsonine. Catalyzes the first committed step in the biosynthesis of complex N-glycans. It controls conversion of high mannose to complex N-glycans; the final hydrolytic step in the N-glycan maturation pathway. This is Alpha-mannosidase 2 (Man2a1) from Rattus norvegicus (Rat).